Consider the following 515-residue polypeptide: Alpha-1B adrenergic receptor (515 aa).

The Extracellular segment spans residues 1–45; sequence MNPDLDTGHNTSAPAHWGELKDDNFTGPNQTSSNSTLPQLDVTRA. N-linked (GlcNAc...) asparagine glycosylation is found at Asn-10, Asn-24, and Asn-34. A helical transmembrane segment spans residues 46 to 70; that stretch reads ISVGLVLGAFILFAIVGNILVILSV. Over 71 to 83 the chain is Cytoplasmic; that stretch reads ACNRHLRTPTNYF. Residues 84–105 traverse the membrane as a helical segment; it reads IVNLAIADLLLSFTVLPFSATL. At 106-115 the chain is on the extracellular side; it reads EVLGYWVLGR. The helical transmembrane segment at 116–141 threads the bilayer; that stretch reads IFCDIWAAVDVLCCTASILSLCAISI. Cys-118 and Cys-195 are oxidised to a cystine. Residues 142–161 lie on the Cytoplasmic side of the membrane; that stretch reads DRYIGVRYSLQYPTLVTRRK. Residues 162-182 traverse the membrane as a helical segment; that stretch reads AILALLSVWVLSTVISIGPLL. Residues 183–201 lie on the Extracellular side of the membrane; the sequence is GWKEPAPNDDKECGVTEEP. Residues 202-224 traverse the membrane as a helical segment; the sequence is FYALFSSLGSFYIPLAVILVMYC. At 225–295 the chain is on the cytoplasmic side; it reads RVYIVAKRTT…FSREKKAAKT (71 aa). Thr-264 is subject to Phosphothreonine. Residues 296–319 traverse the membrane as a helical segment; sequence LGIVVGMFILCWLPFFIALPLGSL. Residues 320–326 lie on the Extracellular side of the membrane; it reads FSTLKPP. The helical transmembrane segment at 327–351 threads the bilayer; sequence DAVFKVVFWLGYFNSCLNPIIYPCS. At 352–515 the chain is on the cytoplasmic side; it reads SKEFKRAFMR…SNMPLAPGHF (164 aa). A lipid anchor (S-palmitoyl cysteine) is attached at Cys-365. The Nuclear localization signal signature appears at 368-378; sequence RGGRRRRRRRR. 2 disordered regions span residues 392–430 and 474–515; these read GGSLERSQSRKDSLDDSGSCMSGTQRTLPSASPSPGYLG and LGDP…PGHF. Polar residues-rich tracts occupy residues 410–424 and 484–498; these read SCMSGTQRTLPSASP and GDTSNGGCDTTTDLA.

The protein belongs to the G-protein coupled receptor 1 family. Adrenergic receptor subfamily. ADRA1B sub-subfamily. As to quaternary structure, homo- and heterooligomer. Heterooligomerizes with ADRA1B homooligomers in cardiac myocytes. Interacts with CAVIN4.

It localises to the nucleus membrane. Its subcellular location is the cell membrane. It is found in the cytoplasm. The protein localises to the membrane. The protein resides in the caveola. Functionally, this alpha-adrenergic receptor mediates its action by association with G proteins that activate a phosphatidylinositol-calcium second messenger system. Its effect is mediated by G(q) and G(11) proteins. Nuclear ADRA1A-ADRA1B heterooligomers regulate phenylephrine (PE)-stimulated ERK signaling in cardiac myocytes. In Rattus norvegicus (Rat), this protein is Alpha-1B adrenergic receptor (Adra1b).